Reading from the N-terminus, the 436-residue chain is Serine--tRNA ligase (436 aa).

The segment covering 43-55 (TKSEQLKQKRNEV) has biased composition (basic and acidic residues). Residues 43-69 (TKSEQLKQKRNEVSDQIAQAKRNKEDA) form a disordered region. 237–239 (TAE) is a binding site for L-serine. ATP is bound at residue 268 to 270 (RSE). Glutamate 291 contacts L-serine. Position 355–358 (355–358 (EISS)) interacts with ATP. Serine 390 serves as a coordination point for L-serine.

Belongs to the class-II aminoacyl-tRNA synthetase family. Type-1 seryl-tRNA synthetase subfamily. Homodimer. The tRNA molecule binds across the dimer.

Its subcellular location is the cytoplasm. The enzyme catalyses tRNA(Ser) + L-serine + ATP = L-seryl-tRNA(Ser) + AMP + diphosphate + H(+). The catalysed reaction is tRNA(Sec) + L-serine + ATP = L-seryl-tRNA(Sec) + AMP + diphosphate + H(+). The protein operates within aminoacyl-tRNA biosynthesis; selenocysteinyl-tRNA(Sec) biosynthesis; L-seryl-tRNA(Sec) from L-serine and tRNA(Sec): step 1/1. In terms of biological role, catalyzes the attachment of serine to tRNA(Ser). Is also able to aminoacylate tRNA(Sec) with serine, to form the misacylated tRNA L-seryl-tRNA(Sec), which will be further converted into selenocysteinyl-tRNA(Sec). This chain is Serine--tRNA ligase, found in Lactobacillus gasseri (strain ATCC 33323 / DSM 20243 / BCRC 14619 / CIP 102991 / JCM 1131 / KCTC 3163 / NCIMB 11718 / NCTC 13722 / AM63).